The primary structure comprises 127 residues: Small ribosomal subunit protein eS8 (127 aa).

The protein belongs to the eukaryotic ribosomal protein eS8 family. As to quaternary structure, part of the 30S ribosomal subunit.

The sequence is that of Small ribosomal subunit protein eS8 from Pyrococcus furiosus (strain ATCC 43587 / DSM 3638 / JCM 8422 / Vc1).